Consider the following 81-residue polypeptide: NAD(P)H-quinone oxidoreductase subunit L (81 aa).

Transmembrane regions (helical) follow at residues 13-33 (LLVI…IPLF) and 51-71 (LGIY…APFL).

The protein belongs to the complex I NdhL subunit family. In terms of assembly, NDH-1 can be composed of about 15 different subunits; different subcomplexes with different compositions have been identified which probably have different functions.

The protein resides in the cellular thylakoid membrane. The enzyme catalyses a plastoquinone + NADH + (n+1) H(+)(in) = a plastoquinol + NAD(+) + n H(+)(out). It carries out the reaction a plastoquinone + NADPH + (n+1) H(+)(in) = a plastoquinol + NADP(+) + n H(+)(out). Its function is as follows. NDH-1 shuttles electrons from an unknown electron donor, via FMN and iron-sulfur (Fe-S) centers, to quinones in the respiratory and/or the photosynthetic chain. The immediate electron acceptor for the enzyme in this species is believed to be plastoquinone. Couples the redox reaction to proton translocation, and thus conserves the redox energy in a proton gradient. Cyanobacterial NDH-1 also plays a role in inorganic carbon-concentration. In Synechococcus sp. (strain WH7803), this protein is NAD(P)H-quinone oxidoreductase subunit L.